The following is an 842-amino-acid chain: Squamosa promoter-binding-like protein 9 (842 aa).

Residues 1-18 (MDAPGGGGGGGGGGGGVD) show a composition bias toward gly residues. Disordered stretches follow at residues 1–22 (MDAP…AGEP), 59–97 (ALLP…RVRK), and 140–168 (RKKP…TPAE). Residues 69-85 (PAEAEAEAAGPASLPSS) show a composition bias toward low complexity. Positions 146 to 162 (AGRGSGAAVGGSGGGAS) are enriched in gly residues. The SBP-type; atypical zinc-finger motif lies at 168 to 245 (EMKCQVPGCE…ERHNKRRRRK (78 aa)). Residues C171, C176, C193, C196, C212, C215, H219, and C231 each coordinate Zn(2+). A Bipartite nuclear localization signal motif is present at residues 228 to 244 (KRSCRRKLERHNKRRRR). Residues 236 to 246 (ERHNKRRRRKP) are compositionally biased toward basic residues. The interval 236–256 (ERHNKRRRRKPDSKGILEKDI) is disordered.

As to expression, ubiquitous.

Its subcellular location is the nucleus. Functionally, trans-acting factor that binds specifically to the consensus nucleotide sequence 5'-TNCGTACAA-3'. This chain is Squamosa promoter-binding-like protein 9 (SPL9), found in Oryza sativa subsp. japonica (Rice).